Consider the following 100-residue polypeptide: Large ribosomal subunit protein bL21 (100 aa).

This sequence belongs to the bacterial ribosomal protein bL21 family. Part of the 50S ribosomal subunit. Contacts protein L20.

Its function is as follows. This protein binds to 23S rRNA in the presence of protein L20. The sequence is that of Large ribosomal subunit protein bL21 from Wolbachia sp. subsp. Brugia malayi (strain TRS).